The chain runs to 787 residues: Zinc finger protein 227 (787 aa).

In terms of domain architecture, KRAB spans 23 to 94; sequence VTFKDVAVVF…ERETQRNGHS (72 aa). 18 consecutive C2H2-type zinc fingers follow at residues 243–275, 312–334, 340–362, 368–390, 396–418, 424–446, 452–474, 480–502, 508–530, 536–558, 564–586, 592–614, 620–642, 648–670, 676–698, 704–726, 732–754, and 760–782; these read HPCRVCGEGFSHGAVLPVHQVDPGEKCSHLQTH, YRCDSCGKAFGSSTGLIIHYRTH, YRCEACGKCFSQSSNFQCHQRVH, YKCEECGKGFGWSVNLRVHQRVH, YKCEECGKGFTQAAHYHIHQRVH, YKCDVCGKGFSHNSPLICHRRVH, YRCEACGKGFTRNTDLHIHFRVH, YTCKECGKGFSQASNLQVHQNVH, FKCETCGKGFSQSSKLQTHQRVH, YRCDVCGKDFSYSSNLKLHQVIH, YTCEACGKGFSWRSNLHAHQRVH, YKCEACDKSFSQAIDFRVHQRVH, YKCGVCGKGFSQSSGLQSHQRVH, YKCDVCGKGFRYSSQFIYHQRGH, YKCEECGKGFGRSLNLRHHQRVH, HKCEECGKAFSLPSNLRVHLSVH, FKCEDCGKGFSQSSRLQAHQRVH, and YKCNICGKDFSHRSRLTYHQKVH.

It belongs to the krueppel C2H2-type zinc-finger protein family.

Its subcellular location is the nucleus. May be involved in transcriptional regulation. In Bos taurus (Bovine), this protein is Zinc finger protein 227 (ZNF227).